Consider the following 210-residue polypeptide: Leucyl/phenylalanyl-tRNA--protein transferase (210 aa).

This sequence belongs to the L/F-transferase family.

Its subcellular location is the cytoplasm. It catalyses the reaction N-terminal L-lysyl-[protein] + L-leucyl-tRNA(Leu) = N-terminal L-leucyl-L-lysyl-[protein] + tRNA(Leu) + H(+). It carries out the reaction N-terminal L-arginyl-[protein] + L-leucyl-tRNA(Leu) = N-terminal L-leucyl-L-arginyl-[protein] + tRNA(Leu) + H(+). The catalysed reaction is L-phenylalanyl-tRNA(Phe) + an N-terminal L-alpha-aminoacyl-[protein] = an N-terminal L-phenylalanyl-L-alpha-aminoacyl-[protein] + tRNA(Phe). In terms of biological role, functions in the N-end rule pathway of protein degradation where it conjugates Leu, Phe and, less efficiently, Met from aminoacyl-tRNAs to the N-termini of proteins containing an N-terminal arginine or lysine. The protein is Leucyl/phenylalanyl-tRNA--protein transferase of Deinococcus radiodurans (strain ATCC 13939 / DSM 20539 / JCM 16871 / CCUG 27074 / LMG 4051 / NBRC 15346 / NCIMB 9279 / VKM B-1422 / R1).